A 127-amino-acid chain; its full sequence is Fluoride-specific ion channel FluC (127 aa).

A run of 4 helical transmembrane segments spans residues 4 to 24 (LLLA…LLSM), 35 to 55 (LGTL…FAWF), 71 to 91 (TGFC…VFLL), and 103 to 123 (VFVN…LFSA). The Na(+) site is built by G75 and T78.

Belongs to the fluoride channel Fluc/FEX (TC 1.A.43) family.

The protein resides in the cell inner membrane. The catalysed reaction is fluoride(in) = fluoride(out). Its activity is regulated as follows. Na(+) is not transported, but it plays an essential structural role and its presence is essential for fluoride channel function. In terms of biological role, fluoride-specific ion channel. Important for reducing fluoride concentration in the cell, thus reducing its toxicity. This chain is Fluoride-specific ion channel FluC, found in Escherichia coli (strain ATCC 8739 / DSM 1576 / NBRC 3972 / NCIMB 8545 / WDCM 00012 / Crooks).